The primary structure comprises 798 residues: Metabotropic glutamate receptor-like protein A (798 aa).

Positions 1–23 are cleaved as a signal peptide; that stretch reads MNKLKFLIILFITFLFNLKYINS. Topologically, residues 24 to 388 are extracellular; sequence LKQCKISVLL…DYSNSMKLGL (365 aa). N-linked (GlcNAc...) asparagine glycans are attached at residues Asn-186, Asn-275, and Asn-320. Residues 389-409 form a helical membrane-spanning segment; that stretch reads TIVSGFCILFCIISMVLVIMF. Residues 410 to 419 lie on the Cytoplasmic side of the membrane; sequence RHAKIIKSAS. The chain crosses the membrane as a helical span at residues 420–440; it reads PIFCLLILFGCIIIFSGCIIF. Residues 441-447 lie on the Extracellular side of the membrane; the sequence is SLSPTDG. Residues 448–468 form a helical membrane-spanning segment; sequence ICGARVWLLSIGYTIFLGSLL. Residues 469–494 lie on the Cytoplasmic side of the membrane; it reads VKNWRIWLLFDNPKLKKRSITNWKLY. The chain crosses the membrane as a helical span at residues 495–515; the sequence is PFVAGILAADVLILALWQGLG. Topologically, residues 516–545 are extracellular; that stretch reads DIRSESRIGIDSLTKYQYANVCSSNDQGSV. A helical membrane pass occupies residues 546–566; that stretch reads ALYILLVFHGIKLLAACFISF. Topologically, residues 567 to 580 are cytoplasmic; sequence KIKAVDIEEFNESK. The helical transmembrane segment at 581–601 threads the bilayer; that stretch reads PIASSIYIITFCLFIVIPLMV. Over 602–609 the chain is Extracellular; the sequence is SPQSVASQ. The helical transmembrane segment at 610 to 630 threads the bilayer; sequence VITIVVCAIVTTLISISLLFG. Residues 631 to 798 lie on the Cytoplasmic side of the membrane; sequence SKFYMMATQG…NQSEIDPDDV (168 aa). Positions 714–771 form a coiled coil; the sequence is AEQDSKLDLENQNDENEIENNQNNQNNIVEDCQKVEKLEKDENLEKDENLEKDENLEK. Positions 752 to 774 are enriched in basic and acidic residues; the sequence is EKDENLEKDENLEKDENLEKDNE. The segment at 752–798 is disordered; sequence EKDENLEKDENLEKDENLEKDNENQSIIQKKRLSKNFNQSEIDPDDV.

In the N-terminal section; belongs to the BMP lipoprotein family. It in the C-terminal section; belongs to the G-protein coupled receptor 3 family. GABA-B receptor subfamily.

The protein resides in the membrane. It is found in the cytoplasm. Its subcellular location is the cell cortex. The protein localises to the perinuclear region. In terms of biological role, may play an important role in the terminal differentiation. The polypeptide is Metabotropic glutamate receptor-like protein A (grlA) (Dictyostelium discoideum (Social amoeba)).